The chain runs to 227 residues: Orotidine 5'-phosphate decarboxylase (227 aa).

Substrate contacts are provided by residues aspartate 8, lysine 30, 59–68 (DLKLYDIPYT), threonine 118, arginine 178, glutamine 187, glycine 207, and arginine 208. The active-site Proton donor is lysine 61.

Belongs to the OMP decarboxylase family. Type 1 subfamily. Homodimer.

The catalysed reaction is orotidine 5'-phosphate + H(+) = UMP + CO2. The protein operates within pyrimidine metabolism; UMP biosynthesis via de novo pathway; UMP from orotate: step 2/2. Catalyzes the decarboxylation of orotidine 5'-monophosphate (OMP) to uridine 5'-monophosphate (UMP). In Helicobacter pylori (strain P12), this protein is Orotidine 5'-phosphate decarboxylase.